The primary structure comprises 182 residues: Putative manganese efflux pump MntP (182 aa).

6 consecutive transmembrane segments (helical) span residues 6-26, 37-57, 59-79, 104-126, 131-149, and 164-181; these read TVLV…GVGT, LSFH…FVGS, AADL…LFIG, SSLV…SFGI, LFLS…TWGA, and METV…KLLL.

Belongs to the MntP (TC 9.B.29) family.

The protein localises to the cell inner membrane. Functionally, probably functions as a manganese efflux pump. The chain is Putative manganese efflux pump MntP from Syntrophobacter fumaroxidans (strain DSM 10017 / MPOB).